The following is a 234-amino-acid chain: Thiamine import ATP-binding protein ThiQ (234 aa).

The ABC transporter domain maps to 2–230 (LTLQQVHYYY…HSHPELVEFF (229 aa)). 32–39 (GPSGAGKS) lines the ATP pocket.

Belongs to the ABC transporter superfamily. Thiamine importer (TC 3.A.1.19.1) family. In terms of assembly, the complex is composed of two ATP-binding proteins (ThiQ), two transmembrane proteins (ThiP) and a solute-binding protein (ThiB).

It is found in the cell inner membrane. The catalysed reaction is thiamine(out) + ATP + H2O = thiamine(in) + ADP + phosphate + H(+). Part of the ABC transporter complex ThiBPQ involved in thiamine import. Responsible for energy coupling to the transport system. The chain is Thiamine import ATP-binding protein ThiQ from Vibrio vulnificus (strain CMCP6).